Reading from the N-terminus, the 721-residue chain is Mitogen-activated protein kinase 6 (721 aa).

The 297-residue stretch at Tyr20–Met316 folds into the Protein kinase domain. Residues Leu26–Val34 and Lys49 each bind ATP. The active-site Proton acceptor is Asp152. Thr626 is modified (phosphothreonine). The TXY signature appears at Thr626–Tyr628. The residue at position 628 (Tyr628) is a Phosphotyrosine.

This sequence belongs to the protein kinase superfamily. CMGC Ser/Thr protein kinase family. MAP kinase subfamily. The cofactor is Mg(2+). Post-translationally, dually phosphorylated on Thr-626 and Tyr-628, which activates the enzyme.

The catalysed reaction is L-seryl-[protein] + ATP = O-phospho-L-seryl-[protein] + ADP + H(+). The enzyme catalyses L-threonyl-[protein] + ATP = O-phospho-L-threonyl-[protein] + ADP + H(+). Its activity is regulated as follows. Activated by threonine and tyrosine phosphorylation. In terms of biological role, phosphorylates microtubule-associated protein 2 (MAP2). May promote entry in the cell cycle. This is Mitogen-activated protein kinase 6 (MAPK6) from Gallus gallus (Chicken).